Reading from the N-terminus, the 512-residue chain is Cytochrome P450 monooxygenase pbrB (512 aa).

A helical transmembrane segment spans residues 6–29 (LSFPAAVGAAFGAFAIYVVARCIY). C452 serves as a coordination point for heme.

The protein belongs to the cytochrome P450 family. Heme is required as a cofactor.

The protein resides in the membrane. It functions in the pathway secondary metabolite biosynthesis; terpenoid biosynthesis. Its function is as follows. Cytochrome P450 monooxygenase; part of the gene cluster that mediates the biosynthesis of the sesquiterpenoid aspterric acid (AA), an inhibitor of dihydroxy-acid dehydratase (DHAD) effective as an herbicide. PbrB catalyzes the second step within the pathway and converts (-)-daucane produced by the terpene cyclase pbrA into an alpha-epoxy carboxylate intermediate which is further converted into the tricyclic aspterric acid by the cytochrome P450 monooxygenase pbrC. The protein is Cytochrome P450 monooxygenase pbrB of Penicillium brasilianum.